The primary structure comprises 454 residues: Adenosylmethionine-8-amino-7-oxononanoate aminotransferase (454 aa).

119-120 (GA) lines the pyridoxal 5'-phosphate pocket. Residue tyrosine 152 participates in substrate binding. Pyridoxal 5'-phosphate is bound at residue aspartate 257. Positions 286, 321, and 416 each coordinate substrate. Position 286 is an N6-(pyridoxal phosphate)lysine (lysine 286).

It belongs to the class-III pyridoxal-phosphate-dependent aminotransferase family. BioA subfamily. As to quaternary structure, homodimer. Requires pyridoxal 5'-phosphate as cofactor.

The protein resides in the cytoplasm. The enzyme catalyses (8S)-8-amino-7-oxononanoate + S-adenosyl-L-methionine = S-adenosyl-4-methylsulfanyl-2-oxobutanoate + (7R,8S)-7,8-diammoniononanoate. It functions in the pathway cofactor biosynthesis; biotin biosynthesis; 7,8-diaminononanoate from 8-amino-7-oxononanoate (SAM route): step 1/1. Its function is as follows. Catalyzes the transfer of the alpha-amino group from S-adenosyl-L-methionine (SAM) to 7-keto-8-aminopelargonic acid (KAPA) to form 7,8-diaminopelargonic acid (DAPA). It is the only aminotransferase known to utilize SAM as an amino donor. This chain is Adenosylmethionine-8-amino-7-oxononanoate aminotransferase, found in Anoxybacillus flavithermus (strain DSM 21510 / WK1).